A 335-amino-acid chain; its full sequence is DNA-directed RNA polymerase subunit alpha (335 aa).

An alpha N-terminal domain (alpha-NTD) region spans residues 1-233 (MVREKIRVST…DLLIPFLHAE (233 aa)). The tract at residues 263 to 335 (KKKIALKFIF…HFVIDLKNKR (73 aa)) is alpha C-terminal domain (alpha-CTD).

Belongs to the RNA polymerase alpha chain family. As to quaternary structure, in plastids the minimal PEP RNA polymerase catalytic core is composed of four subunits: alpha, beta, beta', and beta''. When a (nuclear-encoded) sigma factor is associated with the core the holoenzyme is formed, which can initiate transcription.

The protein resides in the plastid. It is found in the chloroplast. It catalyses the reaction RNA(n) + a ribonucleoside 5'-triphosphate = RNA(n+1) + diphosphate. In terms of biological role, DNA-dependent RNA polymerase catalyzes the transcription of DNA into RNA using the four ribonucleoside triphosphates as substrates. This is DNA-directed RNA polymerase subunit alpha from Spinacia oleracea (Spinach).